Here is a 698-residue protein sequence, read N- to C-terminus: DNA ligase (698 aa).

NAD(+) is bound by residues 47 to 51 (DAQYD), 96 to 97 (SL), and Glu-128. Lys-130 functions as the N6-AMP-lysine intermediate in the catalytic mechanism. NAD(+) is bound by residues Arg-151, Glu-186, Lys-303, and Lys-327. Zn(2+)-binding residues include Cys-422, Cys-425, Cys-440, and Cys-446. Residues 620-698 (GDNLLLSNQT…EEEWIKMVNE (79 aa)) form the BRCT domain.

The protein belongs to the NAD-dependent DNA ligase family. LigA subfamily. It depends on Mg(2+) as a cofactor. Mn(2+) serves as cofactor.

It carries out the reaction NAD(+) + (deoxyribonucleotide)n-3'-hydroxyl + 5'-phospho-(deoxyribonucleotide)m = (deoxyribonucleotide)n+m + AMP + beta-nicotinamide D-nucleotide.. In terms of biological role, DNA ligase that catalyzes the formation of phosphodiester linkages between 5'-phosphoryl and 3'-hydroxyl groups in double-stranded DNA using NAD as a coenzyme and as the energy source for the reaction. It is essential for DNA replication and repair of damaged DNA. This is DNA ligase from Orientia tsutsugamushi (strain Boryong) (Rickettsia tsutsugamushi).